The chain runs to 125 residues: Glycine cleavage system H protein (125 aa).

Positions 22–104 constitute a Lipoyl-binding domain; that stretch reads SYVIGITDFA…YDTGWILKLE (83 aa). Lysine 63 is modified (N6-lipoyllysine).

This sequence belongs to the GcvH family. In terms of assembly, the glycine cleavage system is composed of four proteins: P, T, L and H. (R)-lipoate is required as a cofactor.

Its function is as follows. The glycine cleavage system catalyzes the degradation of glycine. The H protein shuttles the methylamine group of glycine from the P protein to the T protein. Is also involved in protein lipoylation via its role as an octanoyl/lipoyl carrier protein intermediate. In Listeria monocytogenes serotype 4b (strain CLIP80459), this protein is Glycine cleavage system H protein.